Consider the following 217-residue polypeptide: L-lactate dehydrogenase B chain (217 aa).

Residue Asn-22 coordinates NAD(+). The substrate site is built by Asn-22 and Arg-53. The active-site Proton acceptor is the His-77. At Tyr-123 the chain carries Phosphotyrosine. Thr-132 is a substrate binding site. At Lys-212 the chain carries N6-acetyllysine.

It belongs to the LDH/MDH superfamily. LDH family. Homotetramer. Interacts with PTEN upstream reading frame protein MP31; the interaction leads to inhibition of mitochondrial lactate dehydrogenase activity, preventing conversion of lactate to pyruvate in mitochondria.

The protein resides in the cytoplasm. The protein localises to the mitochondrion inner membrane. The catalysed reaction is (S)-lactate + NAD(+) = pyruvate + NADH + H(+). The protein operates within fermentation; pyruvate fermentation to lactate; (S)-lactate from pyruvate: step 1/1. In terms of biological role, interconverts simultaneously and stereospecifically pyruvate and lactate with concomitant interconversion of NADH and NAD(+). The chain is L-lactate dehydrogenase B chain (LDHB) from Oryctolagus cuniculus (Rabbit).